Reading from the N-terminus, the 165-residue chain is Peptide methionine sulfoxide reductase MsrA (165 aa).

Cys-11 is an active-site residue.

The protein belongs to the MsrA Met sulfoxide reductase family.

The catalysed reaction is L-methionyl-[protein] + [thioredoxin]-disulfide + H2O = L-methionyl-(S)-S-oxide-[protein] + [thioredoxin]-dithiol. It catalyses the reaction [thioredoxin]-disulfide + L-methionine + H2O = L-methionine (S)-S-oxide + [thioredoxin]-dithiol. Functionally, has an important function as a repair enzyme for proteins that have been inactivated by oxidation. Catalyzes the reversible oxidation-reduction of methionine sulfoxide in proteins to methionine. The polypeptide is Peptide methionine sulfoxide reductase MsrA (Ureaplasma parvum serovar 3 (strain ATCC 27815 / 27 / NCTC 11736)).